Here is a 132-residue protein sequence, read N- to C-terminus: Small ribosomal subunit protein uS8 (132 aa).

Belongs to the universal ribosomal protein uS8 family. As to quaternary structure, part of the 30S ribosomal subunit. Contacts proteins S5 and S12.

In terms of biological role, one of the primary rRNA binding proteins, it binds directly to 16S rRNA central domain where it helps coordinate assembly of the platform of the 30S subunit. The sequence is that of Small ribosomal subunit protein uS8 from Streptococcus suis (strain 98HAH33).